The chain runs to 142 residues: Complexin (142 aa).

Disordered regions lie at residues 13–70 (QLSA…MRQD) and 83–105 (IVEAAPQEEPNPLMRKKKTPEEL). Positions 29 to 138 (GDDKEKAEEE…NELKTQIEGK (110 aa)) form a coiled coil. Positions 31–70 (DKEKAEEEERERQEAIKEAEDRRKEKHRKMEEEREKMRQD) are enriched in basic and acidic residues. C139 carries the cysteine methyl ester modification. The S-farnesyl cysteine moiety is linked to residue C139. Positions 140–142 (VMQ) are cleaved as a propeptide — removed in mature form.

The protein belongs to the complexin/synaphin family. Binds to the SNARE core complex containing Snap25, synaptobrevin and Syx1A.

Its subcellular location is the membrane. Positively regulates a late step in synaptic vesicle exocytosis. The sequence is that of Complexin (cpx) from Drosophila melanogaster (Fruit fly).